Reading from the N-terminus, the 183-residue chain is Ribosome rescue factor SmrB (183 aa).

A Smr domain is found at 98–173 (LDLHGLTQLQ…GDAALLVLIE (76 aa)).

Belongs to the SmrB family. In terms of assembly, associates with collided ribosomes, but not with correctly translating polysomes.

Its function is as follows. Acts as a ribosome collision sensor. Detects stalled/collided disomes (pairs of ribosomes where the leading ribosome is stalled and a second ribosome has collided with it) and endonucleolytically cleaves mRNA at the 5' boundary of the stalled ribosome. Stalled/collided disomes form a new interface (primarily via the 30S subunits) that binds SmrB. Cleaved mRNA becomes available for tmRNA ligation, leading to ribosomal subunit dissociation and rescue of stalled ribosomes. This is Ribosome rescue factor SmrB from Escherichia coli (strain 55989 / EAEC).